We begin with the raw amino-acid sequence, 212 residues long: Adenylate kinase (212 aa).

10 to 15 provides a ligand contact to ATP; sequence GAGKGT. An NMP region spans residues 30–59; it reads STGDMFRAAMANQTEMGTLAKSFIDKGELV. AMP contacts are provided by residues Thr-31, Arg-36, 57–59, 86–89, and Gln-93; these read ELV and GYPR. The LID stretch occupies residues 127-159; sequence GRIINRKTGETYHKVFNPPADYNEDDYYQREDD. Residues Arg-128 and 137–138 contribute to the ATP site; that span reads TY. Arg-156 and Arg-167 together coordinate AMP. Gln-195 is a binding site for ATP.

This sequence belongs to the adenylate kinase family. Monomer.

The protein localises to the cytoplasm. It catalyses the reaction AMP + ATP = 2 ADP. It participates in purine metabolism; AMP biosynthesis via salvage pathway; AMP from ADP: step 1/1. Its function is as follows. Catalyzes the reversible transfer of the terminal phosphate group between ATP and AMP. Plays an important role in cellular energy homeostasis and in adenine nucleotide metabolism. The protein is Adenylate kinase of Streptococcus mutans serotype c (strain ATCC 700610 / UA159).